We begin with the raw amino-acid sequence, 392 residues long: MKTIICLFTIAIAAMAAVTNLSNVLKNGNDNFTARMFTEVVKNNPGKSIVLSAFSVLPPLAQLALASDGETHEELLKAIGFPDDDAIRTEFASKSRDLRSIKGVELKMANKVYVHDGGKLDENFAVVSRDVFNSDVQNIDFSKNTVAAKSINDWVEENTNNRIKDLVNPDSLSSATAAVLVNAIYFKGAWSSKFDERLTSDRDFYVSKDKTIKVPMMYKRGDYKYGESAVLNAQLIEIPYKGDQSSLIVVLPKDKDGITQLQEALKDPKTLETAQQSMYSTEVDLYLPKFKIETETNLKDVLSNMNVNKIFNNDAQITRLLKGESLSVSEAIQKAFIEINEEGAEAAAANAFTMTRSSKVYVRPPIVFNANKPFYYALQVDGVIMFNGIFIN.

The N-terminal stretch at 1 to 16 is a signal peptide; that stretch reads MKTIICLFTIAIAAMA.

The protein belongs to the serpin family. In terms of tissue distribution, hemolymph.

The protein resides in the secreted. May play a role in the prophenoloxidase activating system in the silkworm hemolymph. The protein is Antitrypsin of Bombyx mori (Silk moth).